Here is a 311-residue protein sequence, read N- to C-terminus: Avirulence protein ATR1 (311 aa).

A signal peptide spans 1-15; the sequence is MRVCYFVLVPSVALA. The RxLR-dEER motif lies at 48–62; the sequence is RALRAQTALDDDEER. WY domain regions lie at residues 127–209 and 210–311; these read DEAL…VKCV and ESED…IYSV.

This sequence belongs to the RxLR effector family. In terms of assembly, monomer. Interacts with defense protein RPP1 from several ecotypes including RPP1-NdA, RPP1-WsB, RPP1-EstA and RPP1-ZdrA, via their leucine-rich repeats (LLRs).

It is found in the secreted. It localises to the host cytoplasm. Its function is as follows. Secreted effector that acts as an elicitor of hypersensitive response (HR) specifically on plants carrying both defense protein RPP1 from several ecotypes including RPP1-NdA, RPP1-WsB, RPP1-EstA and RPP1-ZdrA. The protein is Avirulence protein ATR1 of Hyaloperonospora arabidopsidis (strain Emoy2) (Downy mildew agent).